A 313-amino-acid chain; its full sequence is MARTEDDSWEITESVGATALGVASARAAETRSQHPLISDPFAQVFLDAVGDGVWNWHSAPQLPAELLEIEPDLPLQMEAMVSYMASRTAFFDEFFLDATRAGIGQAVILAAGLDSRAWRLPWPAGTTVFELDQPRVLEFKAATLAEHGAEPACGRVAVAVDLRQDWPTALRQAGFDPSVSSVWSAEGLMPYLPAVAQDLLFERVQGLTVRASRIAVEALGPKFLDPQVRANRSARIERIRAVMAHVEPQREIPRTDELWYFEEREDVGDWFRRHDWDVTVTPSGELMAGYGRAAAAQVEDRVPTNLFVAAQRN.

S-adenosyl-L-methionine contacts are provided by residues D132 and 161–162 (DL).

This sequence belongs to the UPF0677 family.

In terms of biological role, exhibits S-adenosyl-L-methionine-dependent methyltransferase activity. The sequence is that of Putative S-adenosyl-L-methionine-dependent methyltransferase MUL_0706 from Mycobacterium ulcerans (strain Agy99).